A 1009-amino-acid polypeptide reads, in one-letter code: DNA ligase 3 (1009 aa).

A mitochondrion-targeting transit peptide spans 1–42; it reads MSLAFKIFFPQTLRALSRKELCLFRKHHWRDVRQFSQWSETD. The PARP-type zinc finger occupies 93 to 185; the sequence is FCVDYAKRGT…QITQHIADLS (93 aa). Zn(2+)-binding residues include Cys-105, Cys-108, His-139, and Cys-142. Residues Ser-210, Ser-216, Ser-227, and Ser-242 each carry the phosphoserine modification. The segment at 224 to 256 is disordered; it reads RKFSGFSAKPNNSGEAPSSPTPKRSLSSSKCDP. Positions 240–252 are enriched in low complexity; it reads PSSPTPKRSLSSS. Interaction with DNA regions lie at residues 277–280, 318–323, 388–391, and 421–427; these read PSYN, VYNLND, TKED, and KMNSGAK. Residue Glu-506 coordinates ATP. The active-site N6-AMP-lysine intermediate is Lys-508. Arg-513 and Arg-528 together coordinate ATP. The Mg(2+) site is built by Glu-560 and Glu-655. 3 residues coordinate ATP: Lys-660, Arg-671, and Lys-675. The tract at residues 842-917 is disordered; it reads AGDEGSSTTG…LATKSSPVKV (76 aa). Composition is skewed to low complexity over residues 845-854 and 863-877; these read EGSSTTGGSS and SAVS…SAST. A compositionally biased stretch (polar residues) spans 884–898; it reads LSNSNSKDGNMQTAK. A Phosphoserine modification is found at Ser-913. One can recognise a BRCT domain in the interval 933-1009; sequence VLLDIFTGVR…IRKRRLVAPC (77 aa).

Belongs to the ATP-dependent DNA ligase family. Isoform 3 interacts (via BRCT domain) with the nuclear DNA-repair protein XRCC1. Interacts with POLG. Interacts with POLB. Mg(2+) is required as a cofactor. Testis, thymus, prostate and heart.

It is found in the mitochondrion. The protein resides in the nucleus. It catalyses the reaction ATP + (deoxyribonucleotide)n-3'-hydroxyl + 5'-phospho-(deoxyribonucleotide)m = (deoxyribonucleotide)n+m + AMP + diphosphate.. Isoform 3 functions as a heterodimer with DNA-repair protein XRCC1 in the nucleus and can correct defective DNA strand-break repair and sister chromatid exchange following treatment with ionizing radiation and alkylating agents. Isoform 1 is targeted to mitochondria, where it functions as a DNA ligase in mitochondrial base-excision DNA repair. The protein is DNA ligase 3 (LIG3) of Homo sapiens (Human).